The chain runs to 423 residues: 3-isopropylmalate dehydratase large subunit 1 (423 aa).

Positions 302, 362, and 365 each coordinate [4Fe-4S] cluster.

This sequence belongs to the aconitase/IPM isomerase family. LeuC type 2 subfamily. As to quaternary structure, heterodimer of LeuC and LeuD. Requires [4Fe-4S] cluster as cofactor.

The catalysed reaction is (2R,3S)-3-isopropylmalate = (2S)-2-isopropylmalate. The protein operates within amino-acid biosynthesis; L-leucine biosynthesis; L-leucine from 3-methyl-2-oxobutanoate: step 2/4. Catalyzes the isomerization between 2-isopropylmalate and 3-isopropylmalate, via the formation of 2-isopropylmaleate. In Pyrococcus abyssi (strain GE5 / Orsay), this protein is 3-isopropylmalate dehydratase large subunit 1.